The chain runs to 429 residues: Phosphomethylpyrimidine synthase (429 aa).

Residues Asn-66, Met-94, Tyr-123, His-162, 184-186, 225-228, and Glu-264 each bind substrate; these read SRG and DALR. His-268 is a binding site for Zn(2+). Position 291 (Tyr-291) interacts with substrate. Residue His-332 participates in Zn(2+) binding. Cys-408, Cys-411, and Cys-415 together coordinate [4Fe-4S] cluster.

Belongs to the ThiC family. [4Fe-4S] cluster serves as cofactor.

It carries out the reaction 5-amino-1-(5-phospho-beta-D-ribosyl)imidazole + S-adenosyl-L-methionine = 4-amino-2-methyl-5-(phosphooxymethyl)pyrimidine + CO + 5'-deoxyadenosine + formate + L-methionine + 3 H(+). Its pathway is cofactor biosynthesis; thiamine diphosphate biosynthesis. In terms of biological role, catalyzes the synthesis of the hydroxymethylpyrimidine phosphate (HMP-P) moiety of thiamine from aminoimidazole ribotide (AIR) in a radical S-adenosyl-L-methionine (SAM)-dependent reaction. In Sulfurisphaera tokodaii (strain DSM 16993 / JCM 10545 / NBRC 100140 / 7) (Sulfolobus tokodaii), this protein is Phosphomethylpyrimidine synthase.